Reading from the N-terminus, the 906-residue chain is Glutamate receptor 1 (906 aa).

The N-terminal stretch at 1–18 (MQHIFAFFCTGFLGAVVG) is a signal peptide. Residues 19–536 (ANFPNNIQIG…GVFSFLDPLA (518 aa)) are Extracellular-facing. N-linked (GlcNAc...) asparagine glycosylation is found at N63, N249, N257, N363, N401, and N406. C75 and C323 form a disulfide bridge. L-glutamate is bound by residues P492, T494, and R499. The chain crosses the membrane as a helical span at residues 537–557 (YEIWMCIVFAYIGVSVVLFLV). At 558–584 (SRFSPYEWHSEEFEEGRDQTTSDQSNE) the chain is on the cytoplasmic side. Residues 585-600 (FGIFNSLWFSLGAFMQ) constitute an intramembrane region (helical; Pore-forming). Residues 601–603 (QGC) lie within the membrane without spanning it. C603 is lipidated: S-palmitoyl cysteine. Residues 604–609 (DISPRS) are Cytoplasmic-facing. A helical membrane pass occupies residues 610–630 (LSGRIVGGVWWFFTLIIISSY). Over 631-805 (TANLAAFLTV…DKTSALSLSN (175 aa)) the chain is Extracellular. A Phosphoserine modification is found at S645. 2 residues coordinate L-glutamate: S668 and T669. S710 is subject to Phosphoserine. An L-glutamate-binding site is contributed by E719. C732 and C787 are joined by a disulfide. Residues 806–826 (VAGVFYILIGGLGLAMLVALI) form a helical membrane-spanning segment. Topologically, residues 827–906 (EFCYKSRSES…SGMPLGATGL (80 aa)) are cytoplasmic. Residue C829 is the site of S-palmitoyl cysteine attachment. Phosphoserine occurs at positions 849 and 863. The interval 861–880 (RNSGAGASSAGSGENGRVVS) is disordered. Low complexity predominate over residues 863–872 (SGAGASSAGS). Positions 903–906 (ATGL) match the PDZ-binding motif.

It belongs to the glutamate-gated ion channel (TC 1.A.10.1) family. GRIA1 subfamily. As to quaternary structure, homotetramer or heterotetramer of pore-forming glutamate receptor subunits; heteromeric assembly can be the result of both receptor subtype and flip-flop forms and according the composition, one partner can be dominant with respect to the fast desensitizing current component, whereas the other can determine the steady-state component. Tetramers may be formed by the dimerization of dimers. Found in a complex with GRIA2, GRIA3, GRIA4, CNIH2, CNIH3, CACNG2, CACNG3, CACNG4, CACNG5, CACNG7 and CACNG8. Interacts with HIP1 and RASGRF2. Interacts with SYNDIG1 and GRIA2. Interacts with DLG1 (via C-terminus). Interacts with LRFN1. Interacts with PRKG2. Interacts with CNIH2 and CACNG2. Interacts with CACNG5; this interaction modulates the gating. Interacts (via C-terminus) with PDLIM4 (via LIM domain); this interaction as well as the interaction of PDLIM4 with alpha-actinin is required for their colocalization in early endosomes. Interacts with SNX27 (via PDZ domain); the interaction is required for recycling to the plasma membrane when endocytosed and prevent degradation in lysosomes. Interacts (via PDZ-binding motif) with SHANK3 (via PDZ domain). Interacts with CACNG3; associates GRIA1 with the adapter protein complex 4 (AP-4) to target GRIA1 to the somatodendritic compartment of neurons. Interacts with CACNG2; this interaction mediates traffick to the plasma membrane and modulation of desensitization. Interaction with CNIH2 and CNIH3; this interaction promotes expression at the plasma membrane and extensively modulates their gating properties by slowing deactivation and desensitization kinetics. Found in a complex with GRIA2, GRIA3, GRIA4, DLG4, CACNG8 and CNIH2. In terms of processing, phosphorylated at Ser-645. Phosphorylated at Ser-710 by PKC. Phosphorylated at Ser-849 by PKC, PKA and CAMK2. Phosphorylated at Ser-863 by PKC, PKA and PRKG2. Phosphorylation of Ser-863 is reduced by induction of long-term depression and increased by induction of long-term potentiation. Palmitoylated. Depalmitoylated by CPT1C and upon L-glutamate stimulation. ZDHHC3/GODZ specifically palmitoylates Cys-603, which leads to Golgi retention and decreased cell surface expression. In contrast, Cys-829 palmitoylation does not affect cell surface expression but regulates stimulation-dependent endocytosis.

The protein localises to the cell membrane. The protein resides in the endoplasmic reticulum membrane. It is found in the postsynaptic cell membrane. Its subcellular location is the postsynaptic density membrane. It localises to the cell projection. The protein localises to the dendrite. The protein resides in the dendritic spine. It is found in the early endosome membrane. Its subcellular location is the recycling endosome membrane. It localises to the presynapse. The protein localises to the synapse. The enzyme catalyses Ca(2+)(in) = Ca(2+)(out). It carries out the reaction Na(+)(in) = Na(+)(out). It catalyses the reaction Mg(2+)(in) = Mg(2+)(out). The catalysed reaction is Li(+)(in) = Li(+)(out). The enzyme catalyses K(+)(in) = K(+)(out). It carries out the reaction Sr(2+)(in) = Sr(2+)(out). Its function is as follows. Ionotropic glutamate receptor that functions as a ligand-gated cation channel, gated by L-glutamate and glutamatergic agonists such as alpha-amino-3-hydroxy-5-methyl-4-isoxazolepropionic acid (AMPA), quisqualic acid, and kainic acid. L-glutamate acts as an excitatory neurotransmitter at many synapses in the central nervous system. Binding of the excitatory neurotransmitter L-glutamate induces a conformation change, leading to the opening of the cation channel, and thereby converts the chemical signal to an electrical impulse upon entry of monovalent and divalent cations such as sodium and calcium. The receptor then desensitizes rapidly and enters in a transient inactive state, characterized by the presence of bound agonist. In the presence of CACNG2 or CACNG4 or CACNG7 or CACNG8, shows resensitization which is characterized by a delayed accumulation of current flux upon continued application of L-glutamate. Calcium (Ca(2+)) permeability depends on subunits composition and, heteromeric channels containing edited GRIA2 subunit are calcium-impermeable. Also permeable to other divalents cations such as strontium(2+) and magnesium(2+) and monovalent cations such as potassium(1+) and lithium(1+). This chain is Glutamate receptor 1, found in Macaca fascicularis (Crab-eating macaque).